Consider the following 952-residue polypeptide: Lysosomal alpha-glucosidase (952 aa).

A signal peptide spans 1–27; the sequence is MRVRHPPCSRRLLAICALVSLATAALL. Residues 28-69 constitute a propeptide that is removed on maturation; sequence GHILLHDFLLVPRELSGSSPVLEETHPAHQQGASRPGPRDAQ. The tract at residues 47-80 is disordered; that stretch reads PVLEETHPAHQQGASRPGPRDAQAHLGRPRAVPT. Positions 80-131 constitute a P-type domain; the sequence is TQCDVPPNSRFDCAPDKAITREQCDARGCCYIPAKQGLRGAQMGQPWCFFPP. Cystine bridges form between C82/C109, C92/C108, and C103/C127. N-linked (GlcNAc...) asparagine glycans are attached at residues N140, N233, and N390. D404 serves as a coordination point for substrate. N470 is a glycosylation site (N-linked (GlcNAc...) asparagine). D518 (nucleophile) is an active-site residue. The active site involves E521. C533 and C558 are disulfide-bonded. Substrate contacts are provided by R600 and D616. C647 and C658 are disulfide-bonded. Residue N652 is glycosylated (N-linked (GlcNAc...) asparagine). Substrate is bound at residue H674. N882 and N925 each carry an N-linked (GlcNAc...) asparagine glycan.

Belongs to the glycosyl hydrolase 31 family.

Its subcellular location is the lysosome. It is found in the lysosome membrane. It carries out the reaction Hydrolysis of terminal, non-reducing (1-&gt;4)-linked alpha-D-glucose residues with release of alpha-D-glucose.. Its function is as follows. Essential for the degradation of glycogen in lysosomes. Has highest activity on alpha-1,4-linked glycosidic linkages, but can also hydrolyze alpha-1,6-linked glucans. In Pongo abelii (Sumatran orangutan), this protein is Lysosomal alpha-glucosidase (GAA).